Reading from the N-terminus, the 482-residue chain is Cytochrome P450 monooxygenase pynD (482 aa).

Positions 1–22 are cleaved as a signal peptide; that stretch reads MWRIPVIVALVAGLLYWVRKQG. The N-linked (GlcNAc...) asparagine glycan is linked to Asn-401. Cys-417 provides a ligand contact to heme.

This sequence belongs to the cytochrome P450 family. The cofactor is heme.

The protein operates within secondary metabolite biosynthesis. Cytochrome P450 monooxygenase; part of the gene cluster that mediates the biosynthesis of pyranonigrins, a family of antioxidative compounds. The first step of pyranonigrins biosynthesis is performed by the hybrid PKS-NRPS synthetase that condenses 6 malonyl-CoA units to an acetyl starter unit, to form a 1,3,5-trioxotetradecane-6,8-dienyl-ACP. The enoyl reductase (ER) domain of pynA is likely to be functional during the first two rounds of polyketide chain extension, to generate the saturated C-C bonds of the alkyl side chain. PynA subsequently forms the amide bond between the acyl chain and L-serine. Although pynA has a terminal reductase domain, it appears to require the thioesterase pynI for the release of the straight-chain intermediate from pynA via the formation of a tetramic acid pyranonigrin J. The methyltransferase pynC then coverts pyranonigrin J to pyranonigrin I via N-methylation. The FAD-dependent monooxygenase pynG catalyzes an epoxidation-mediated cyclization to form the dihydro-gamma-pyrone moiety, followed by pynD-catalyzed oxidation of the alcohol to the ketone and enolization to yield the characteristic tetramic acid-fused gamma-pyrone core of pyranonigrin H. Pyranonigrin H is substrate of pynH for dehydration-mediated exo-methylene formation from the serine side chain to produce pyranonigrin E, before the oxidase pynE reduces the exo-methylene of pyranonigrin E into a pendant methyl to form pyranonigrin G. The FAD-linked oxidoreductase pynB performs the reverse reaction and converts pyranonigrin G back to pyranonigrin E. The protein is Cytochrome P450 monooxygenase pynD of Aspergillus niger (strain ATCC MYA-4892 / CBS 513.88 / FGSC A1513).